The primary structure comprises 943 residues: Aconitate hydratase A (943 aa).

Residues Cys-479, Cys-545, and Cys-548 each contribute to the [4Fe-4S] cluster site.

Belongs to the aconitase/IPM isomerase family. Monomer. It depends on [4Fe-4S] cluster as a cofactor.

It catalyses the reaction citrate = D-threo-isocitrate. It carries out the reaction (2S,3R)-3-hydroxybutane-1,2,3-tricarboxylate = 2-methyl-cis-aconitate + H2O. The protein operates within carbohydrate metabolism; tricarboxylic acid cycle; isocitrate from oxaloacetate: step 2/2. Its pathway is organic acid metabolism; propanoate degradation. In terms of biological role, involved in the catabolism of short chain fatty acids (SCFA) via the tricarboxylic acid (TCA)(acetyl degradation route) and probably via the 2-methylcitrate cycle I (propionate degradation route). Catalyzes the reversible isomerization of citrate to isocitrate via cis-aconitate. The apo form of AcnA functions as a RNA-binding regulatory protein which binds to selected IRE-like sequences present within the UTRs (untranslated regions) of 3' trxC and 5' IdeR mRNA. Could catalyze the hydration of 2-methyl-cis-aconitate to yield (2R,3S)-2-methylisocitrate. The sequence is that of Aconitate hydratase A (acn) from Mycobacterium tuberculosis (strain ATCC 25618 / H37Rv).